The chain runs to 417 residues: L-rhamnose isomerase (417 aa).

Mn(2+) contacts are provided by H260, D292, and D294.

It belongs to the rhamnose isomerase family. The cofactor is Mn(2+).

It is found in the cytoplasm. The catalysed reaction is L-rhamnopyranose = L-rhamnulose. It functions in the pathway carbohydrate degradation; L-rhamnose degradation; glycerone phosphate from L-rhamnose: step 1/3. Its function is as follows. Catalyzes the interconversion of L-rhamnose and L-rhamnulose. The polypeptide is L-rhamnose isomerase (Mannheimia succiniciproducens (strain KCTC 0769BP / MBEL55E)).